The chain runs to 2828 residues: Matrix-remodeling-associated protein 5 (2828 aa).

An N-terminal signal peptide occupies residues 1 to 26 (MPKRAHWGALSVVLILLWGHPRVALA). An LRRNT domain is found at 27–55 (CPHPCACYVPSEVHCTFRSLASVPAGIAK). LRR repeat units lie at residues 56-77 (HVER…SFAG), 80-101 (KLEL…ALRD), 104-125 (SLQV…TLQG), 128-149 (NLMR…AFNG), 152-173 (SLRL…TFST), and 184-205 (TIRH…MLRN). One can recognise an LRRCT domain in the interval 217–277 (NPWTCDCEMR…HKLKDMTCLK (61 aa)). Residues Asn287 and Asn321 are each glycosylated (N-linked (GlcNAc...) asparagine). Ig-like C2-type domains are found at residues 481-571 (PSGA…YRVL) and 575-669 (PSTQ…ITVT). Disulfide bonds link Cys501–Cys555 and Cys599–Cys651. Asn633 carries an N-linked (GlcNAc...) asparagine glycan. Disordered regions lie at residues 671 to 715 (KGSG…RRLL), 933 to 962 (KPTH…EYEP), 1068 to 1190 (QGGN…APDI), 1204 to 1275 (AWVD…SSET), and 1367 to 1389 (EESS…AQPG). Over residues 695–708 (IVEDEGGSGMGDEE) the composition is skewed to acidic residues. Ser702 carries an O-linked (Xyl...) (chondroitin sulfate) serine glycan. Positions 951–962 (SSPEPTSSEYEP) are enriched in low complexity. Residues 1090 to 1107 (SKSITLPDSTLGIMSSMS) are compositionally biased toward polar residues. Residues 1146-1168 (PSRRRPNGRRRLRPNKFRHRHKQ) show a composition bias toward basic residues. Polar residues-rich tracts occupy residues 1169–1190 (TPPT…APDI) and 1204–1214 (AWVDNTVNTPK). Residues 1229–1243 (TPRRKHGKRPNKHRY) are compositionally biased toward basic residues. N-linked (GlcNAc...) asparagine glycosylation occurs at Asn1403. Residues 1410-1434 (LKELEDVDFTSEFLSSLTVSTPFHQ) form an LRR 7 repeat. 5 disordered regions span residues 1479-1499 (QNHT…PSTI), 1536-1566 (NPET…SDQD), 1579-1603 (QVFG…HASH), 1669-1689 (STTI…KFTD), and 1700-1719 (KVFG…KPPS). Over residues 1542–1566 (TPVNNEGTQHMSGPNELSTPSSDQD) the composition is skewed to polar residues. An N-linked (GlcNAc...) asparagine glycan is attached at Asn1735. Ig-like C2-type domains lie at 1853-1946 (PQIL…LSVT), 1950-2041 (PQIL…IRLH), 2046-2140 (PPVI…LNVQ), 2146-2239 (ARIT…VDVV), 2242-2343 (PAKI…KVVT), 2345-2432 (PATI…KTVW), 2440-2534 (PKIN…LQLT), 2542-2630 (PIFH…RLVS), 2637-2722 (PEAN…PSVT), and 2733-2828 (PRIT…IHVF). 2 cysteine pairs are disulfide-bonded: Cys1875-Cys1928 and Cys1972-Cys2025. 2 N-linked (GlcNAc...) asparagine glycosylation sites follow: Asn2007 and Asn2056. Intrachain disulfides connect Cys2069–Cys2122, Cys2168–Cys2221, Cys2265–Cys2324, Cys2368–Cys2418, Cys2466–Cys2518, Cys2564–Cys2616, Cys2659–Cys2711, and Cys2755–Cys2810. An N-linked (GlcNAc...) asparagine glycan is attached at Asn2693.

In terms of tissue distribution, detected in placenta (at protein level). Detected in cerebrospinal fluid and fibroblasts (at protein level). Highly expressed in kidney, also detected on liver and spleen. Expressed by proximal tubular cells of the kidney (at protein level). Expression highly increases during chronic kidney disease and autosomal dominant polycystic kidney disease, where is detected in cysts.

The protein localises to the secreted. In terms of biological role, in kidney, has anti-inflammatory and anti-fibrotic properties by limiting the induction of chemokines, fibronectin and collagen expression in response to TGB1 and pro-inflammatory stimuli. The polypeptide is Matrix-remodeling-associated protein 5 (MXRA5) (Homo sapiens (Human)).